A 78-amino-acid chain; its full sequence is Acyl carrier protein (78 aa).

Residues 2–77 enclose the Carrier domain; that stretch reads SNIEQQVKKI…LAIDYINAHN (76 aa). The residue at position 37 (serine 37) is an O-(pantetheine 4'-phosphoryl)serine.

Belongs to the acyl carrier protein (ACP) family. Post-translationally, 4'-phosphopantetheine is transferred from CoA to a specific serine of apo-ACP by AcpS. This modification is essential for activity because fatty acids are bound in thioester linkage to the sulfhydryl of the prosthetic group.

The protein resides in the cytoplasm. It functions in the pathway lipid metabolism; fatty acid biosynthesis. In terms of biological role, carrier of the growing fatty acid chain in fatty acid biosynthesis. The sequence is that of Acyl carrier protein from Neisseria gonorrhoeae (strain ATCC 700825 / FA 1090).